Reading from the N-terminus, the 226-residue chain is Chalcone--flavanone isomerase 1B-1 (226 aa).

Substrate-binding residues include T50, N115, and T192.

This sequence belongs to the chalcone isomerase family.

It catalyses the reaction a chalcone = a flavanone.. It participates in secondary metabolite biosynthesis; flavonoid biosynthesis. Catalyzes the intramolecular cyclization of bicyclic chalcones into tricyclic (S)-flavanones. Responsible for the isomerization of 4,2',4',6'-tetrahydroxychalcone (also termed chalcone) into naringenin. This is Chalcone--flavanone isomerase 1B-1 (CHI1B1) from Glycine max (Soybean).